We begin with the raw amino-acid sequence, 304 residues long: Bifunctional protein FolD (304 aa).

Residues glycine 170–serine 172, serine 195, and isoleucine 236 each bind NADP(+).

The protein belongs to the tetrahydrofolate dehydrogenase/cyclohydrolase family. In terms of assembly, homodimer.

It carries out the reaction (6R)-5,10-methylene-5,6,7,8-tetrahydrofolate + NADP(+) = (6R)-5,10-methenyltetrahydrofolate + NADPH. The catalysed reaction is (6R)-5,10-methenyltetrahydrofolate + H2O = (6R)-10-formyltetrahydrofolate + H(+). The protein operates within one-carbon metabolism; tetrahydrofolate interconversion. Catalyzes the oxidation of 5,10-methylenetetrahydrofolate to 5,10-methenyltetrahydrofolate and then the hydrolysis of 5,10-methenyltetrahydrofolate to 10-formyltetrahydrofolate. This is Bifunctional protein FolD from Anaplasma phagocytophilum (strain HZ).